A 932-amino-acid chain; its full sequence is Valine--tRNA ligase (932 aa).

The 'HIGH' region motif lies at 75–85 (PNVTGQLHMGH). The 'KMSKS' region signature appears at 568–572 (KMSKS). An ATP-binding site is contributed by lysine 571. A coiled-coil region spans residues 863 to 929 (TVDVAAERKR…ERITARLEGL (67 aa)).

The protein belongs to the class-I aminoacyl-tRNA synthetase family. ValS type 1 subfamily. As to quaternary structure, monomer.

It localises to the cytoplasm. It catalyses the reaction tRNA(Val) + L-valine + ATP = L-valyl-tRNA(Val) + AMP + diphosphate. Catalyzes the attachment of valine to tRNA(Val). As ValRS can inadvertently accommodate and process structurally similar amino acids such as threonine, to avoid such errors, it has a 'posttransfer' editing activity that hydrolyzes mischarged Thr-tRNA(Val) in a tRNA-dependent manner. The protein is Valine--tRNA ligase of Corynebacterium jeikeium (strain K411).